The primary structure comprises 141 residues: Ly6/PLAUR domain-containing protein 1 (141 aa).

The signal sequence occupies residues 1-20 (MWVLGIAATFCGLFWLPGLA). 6 cysteine pairs are disulfide-bonded: C25-C54, C28-C37, C46-C71, C77-C100, C88-C97, and C101-C106. The 84-residue stretch at 25-108 (CYQCEEFQLN…SCCNTPLCNG (84 aa)) folds into the UPAR/Ly6 domain. The N-linked (GlcNAc...) asparagine glycan is linked to N45. G115 is lipidated: GPI-anchor amidated glycine. The propeptide at 116 to 141 (SSASAIRPELFTTVLFFNLALCLAHC) is removed in mature form.

Interacts with CHRNA4 and nAChRs containing alpha-4:beta-2 (CHRNA4:CHRNB2) and alpha-7 (CHRNA7) subunits.

The protein localises to the cell membrane. Functionally, believed to act as a modulator of nicotinic acetylcholine receptors (nAChRs) activity. In vitro increases receptor desensitization and decreases affinity for ACh of alpha-4:beta-2-containing nAChRs. May play a role in the intracellular trafficking of alpha-4:beta-2 and alpha-7-containing nAChRs and may inhibit their expression at the cell surface. May be involved in the control of anxiety. The polypeptide is Ly6/PLAUR domain-containing protein 1 (Lypd1) (Rattus norvegicus (Rat)).